The following is a 436-amino-acid chain: Histidinol dehydrogenase (436 aa).

Positions 240, 262, and 265 each coordinate substrate. The Zn(2+) site is built by Gln262 and His265. Active-site proton acceptor residues include Glu331 and His332. 4 residues coordinate substrate: His332, Asp365, Glu419, and His424. Asp365 provides a ligand contact to Zn(2+). His424 contributes to the Zn(2+) binding site.

The protein belongs to the histidinol dehydrogenase family. It depends on Zn(2+) as a cofactor.

It carries out the reaction L-histidinol + 2 NAD(+) + H2O = L-histidine + 2 NADH + 3 H(+). Its pathway is amino-acid biosynthesis; L-histidine biosynthesis; L-histidine from 5-phospho-alpha-D-ribose 1-diphosphate: step 9/9. Functionally, catalyzes the sequential NAD-dependent oxidations of L-histidinol to L-histidinaldehyde and then to L-histidine. The polypeptide is Histidinol dehydrogenase (Leifsonia xyli subsp. xyli (strain CTCB07)).